The chain runs to 713 residues: Catalase-peroxidase (713 aa).

Positions 77 to 200 (WHSAGTYRTT…LGATVMGLIY (124 aa)) form a cross-link, tryptophyl-tyrosyl-methioninium (Trp-Tyr) (with M-226). Residue His78 is the Proton acceptor of the active site. Residues 200 to 226 (YVNPEGPDGEPDLEGSAANIRESFGRM) constitute a cross-link (tryptophyl-tyrosyl-methioninium (Tyr-Met) (with W-77)). His241 contacts heme b.

This sequence belongs to the peroxidase family. Peroxidase/catalase subfamily. As to quaternary structure, homodimer or homotetramer. Requires heme b as cofactor. Formation of the three residue Trp-Tyr-Met cross-link is important for the catalase, but not the peroxidase activity of the enzyme.

It catalyses the reaction H2O2 + AH2 = A + 2 H2O. It carries out the reaction 2 H2O2 = O2 + 2 H2O. Its function is as follows. Bifunctional enzyme with both catalase and broad-spectrum peroxidase activity. This Natronomonas pharaonis (strain ATCC 35678 / DSM 2160 / CIP 103997 / JCM 8858 / NBRC 14720 / NCIMB 2260 / Gabara) (Halobacterium pharaonis) protein is Catalase-peroxidase.